Consider the following 264-residue polypeptide: Glutamate racemase (264 aa).

Residues 11–12 (DS) and 43–44 (YG) contribute to the substrate site. Cysteine 74 (proton donor/acceptor) is an active-site residue. 75 to 76 (NT) is a substrate binding site. Cysteine 193 serves as the catalytic Proton donor/acceptor. 194 to 195 (TH) provides a ligand contact to substrate.

The protein belongs to the aspartate/glutamate racemases family.

The enzyme catalyses L-glutamate = D-glutamate. It participates in cell wall biogenesis; peptidoglycan biosynthesis. Functionally, provides the (R)-glutamate required for cell wall biosynthesis. The protein is Glutamate racemase of Bifidobacterium longum subsp. infantis (strain ATCC 15697 / DSM 20088 / JCM 1222 / NCTC 11817 / S12).